The chain runs to 193 residues: Sarcoplasmic calcium-binding protein, alpha chain (193 aa).

IgE-binding epitope stretches follow at residues 10-36 and 49-72; these read KYVV…LAVR and DAYA…ADFN. 3 consecutive EF-hand domains span residues 16-40, 57-92, and 101-136; these read MYDI…NTLI, IMRN…HCQG, and AFKV…RSAF. 14 residues coordinate Ca(2+): D18, D20, N22, D29, D70, N72, D74, E76, E81, D114, N116, D118, K120, and E125. Residues 130–147 form an igE-binding epitope region; sequence CITRSAFAEVKEIDDAYN.

SCPs from crayfish, lobster, and shrimp are polymorphic dimers; three isotypes (alpha-alpha, alpha-beta, and beta-beta) have been identified. Expressed in tail muscle (at protein level).

Its function is as follows. Like parvalbumins, SCPs seem to be more abundant in fast contracting muscles, but no functional relationship can be established from this distribution. The polypeptide is Sarcoplasmic calcium-binding protein, alpha chain (Penaeus vannamei (Whiteleg shrimp)).